A 260-amino-acid polypeptide reads, in one-letter code: MQLTSASVCLLWMGLLSWVSHRIDASQGFPSPLKRCKLQEESCLVAQAQTFFQAFQKGIPERQVAALEPIDLGTMRIESGGHSESLKFKLVMSDAKLYNLANSVVVKSLKGFTKDLTKPLKLTLLMDTPELEVRAKYDVDGKLLILPIVSKGDLTIRMNEVQTKRRITAEPVKRSDGHSYLNITDYKTITKIKGGHFDLSNLFDDNKELRESTLKVLNQEWNTLALDVQPKINEACSKAFRAILQSLWANIPYDEFFKAE.

The signal sequence occupies residues 1–25 (MQLTSASVCLLWMGLLSWVSHRIDA).

This sequence belongs to the TO family.

Its function is as follows. Component of the circadian clock or downstream effector of clock function. Required for suppressing daytime sleep (siesta) under ambient environmental temperatures. Part of a heat avoidance mechanism that modulates daytime sleep behavior under different environmental temperatures to minimize the risk of heat exposure. Under cooler ambient temperatures, suppresses daytime sleep (siesta) and thus allows for longer periods of daytime activity. This chain is Circadian clock-controlled protein daywake, found in Drosophila yakuba (Fruit fly).